The chain runs to 161 residues: Nucleotide-binding protein NE2248 (161 aa).

Belongs to the YajQ family.

Functionally, nucleotide-binding protein. The polypeptide is Nucleotide-binding protein NE2248 (Nitrosomonas europaea (strain ATCC 19718 / CIP 103999 / KCTC 2705 / NBRC 14298)).